The chain runs to 394 residues: Endothelial cell-selective adhesion molecule (394 aa).

Positions 1-29 are cleaved as a signal peptide; that stretch reads MILQAGTPETSLLRVLFLGLSTLAAFSRA. Residues 30–251 lie on the Extracellular side of the membrane; it reads QMELHVPPGL…LDVMTGSKAA (222 aa). The region spanning 37–146 is the Ig-like V-type domain; it reads PGLNKLEAVE…EGKSIGHSIK (110 aa). Asn-111, Asn-172, Asn-216, and Asn-239 each carry an N-linked (GlcNAc...) asparagine glycan. One can recognise an Ig-like C2-type domain in the interval 159-243; the sequence is PSCSLQGVPY…GFAKCNVTLD (85 aa). Residues Cys-177 and Cys-227 are joined by a disulfide bond. A helical membrane pass occupies residues 252-272; it reads VVAGAVVGTFVGLVLIAGLVL. Topologically, residues 273-394 are cytoplasmic; that stretch reads LYQRRSKTLE…PAQSQAGSLV (122 aa). Residue Ser-304 is modified to Phosphoserine. Polar residues-rich tracts occupy residues 304–318 and 335–347; these read SDTI…SVTS and FTPT…QALS. The disordered stretch occupies residues 304–372; sequence SDTISKNGTL…SLTPGGVSSS (69 aa). A phosphothreonine mark is found at Thr-336 and Thr-338. Ser-340, Ser-343, Ser-348, and Ser-375 each carry phosphoserine.

As to quaternary structure, interacts with MAGI1. As to expression, highly expressed in the heart and lung. Weakly expressed in the kidney and skin. Expression is restricted to the vascular endothelial cells. Expressed in the kidney, heart and tongue (at protein level). Also expressed on megakaryocytes and activated platelets.

It is found in the cell junction. The protein localises to the adherens junction. Its subcellular location is the tight junction. The protein resides in the cell membrane. In terms of biological role, can mediate aggregation most likely through a homophilic molecular interaction. The protein is Endothelial cell-selective adhesion molecule (Esam) of Mus musculus (Mouse).